A 167-amino-acid chain; its full sequence is MKMFSMLALFVIAADQFTKKLAVFFLRDMQQSITIIPDFFSFTYAENRGVAFGMEFAPPFVLLMLTGAIVLGVLVFVARSRNRTPIFLSAFGLIAGGGIGNMIDRIASGRVTDFIYFDLYKGELFGHWVSLWPIFNVADSAITIGACMLVLFYNRIFPDTEETRHAG.

2 helical membrane passes run 56 to 76 and 84 to 104; these read FAPP…VLVF and TPIF…NMID. Active-site residues include D113 and D139. A helical transmembrane segment spans residues 132–152; that stretch reads WPIFNVADSAITIGACMLVLF.

The protein belongs to the peptidase A8 family.

Its subcellular location is the cell inner membrane. It catalyses the reaction Release of signal peptides from bacterial membrane prolipoproteins. Hydrolyzes -Xaa-Yaa-Zaa-|-(S,diacylglyceryl)Cys-, in which Xaa is hydrophobic (preferably Leu), and Yaa (Ala or Ser) and Zaa (Gly or Ala) have small, neutral side chains.. It participates in protein modification; lipoprotein biosynthesis (signal peptide cleavage). This protein specifically catalyzes the removal of signal peptides from prolipoproteins. The sequence is that of Lipoprotein signal peptidase from Chlorobium luteolum (strain DSM 273 / BCRC 81028 / 2530) (Pelodictyon luteolum).